A 533-amino-acid chain; its full sequence is Sterol 26-hydroxylase, mitochondrial (533 aa).

The N-terminal 32 residues, 1–32 (MAVLSRMRLRWALLDTRVMGHGLCPQGARAKA), are a transit peptide targeting the mitochondrion. The segment at 38–58 (LRDHESTEGPGTGQDRPRLRS) is disordered. 2 positions are modified to N6-acetyllysine: K142 and K375. Residues 386 to 400 (PLLKAVIKETLRLYP) form a sterol-binding region. Heme is bound at residue C479. Residues K512 and K523 each carry the N6-acetyllysine modification.

The protein belongs to the cytochrome P450 family. As to quaternary structure, interacts with HSP70; this interaction is required for initial targeting to mitochondria. Heme serves as cofactor. Expressed in liver, kidney and ovary.

The protein localises to the mitochondrion inner membrane. It carries out the reaction 5beta-cholestane-3alpha,7alpha,12alpha-triol + 6 reduced [adrenodoxin] + 3 O2 + 5 H(+) = (25R)-3alpha,7alpha,12alpha-trihydroxy-5beta-cholestan-26-oate + 6 oxidized [adrenodoxin] + 4 H2O. The catalysed reaction is cholestanol + 2 reduced [adrenodoxin] + O2 + 2 H(+) = (25R)-26-hydroxycholestanol + 2 oxidized [adrenodoxin] + H2O. It catalyses the reaction (25R)-3beta-hydroxycholest-5-en-7-one-26-al + 2 reduced [adrenodoxin] + O2 + H(+) = (25R)-3beta-hydroxycholest-5-en-7-one-26-oate + 2 oxidized [adrenodoxin] + H2O. The enzyme catalyses (25R)-3beta,26-dihydroxycholest-5-en-7-one + 2 reduced [adrenodoxin] + O2 + 2 H(+) = (25R)-3beta-hydroxycholest-5-en-7-one-26-al + 2 oxidized [adrenodoxin] + 2 H2O. It carries out the reaction 7-oxocholesterol + 2 reduced [adrenodoxin] + O2 + 2 H(+) = (25R)-3beta,26-dihydroxycholest-5-en-7-one + 2 oxidized [adrenodoxin] + H2O. The catalysed reaction is calciol + 2 reduced [adrenodoxin] + O2 + 2 H(+) = calcidiol + 2 oxidized [adrenodoxin] + H2O. It catalyses the reaction (25R)-5beta-cholestane-3alpha,7alpha,12alpha,26-tetrol + 2 reduced [adrenodoxin] + O2 + 2 H(+) = (25R)-3alpha,7alpha,12alpha-trihydroxy-5beta-cholestan-26-al + 2 oxidized [adrenodoxin] + 2 H2O. The enzyme catalyses 2 reduced [adrenodoxin] + cholesterol + O2 + 2 H(+) = (25R)-cholest-5-ene-3beta,26-diol + 2 oxidized [adrenodoxin] + H2O. It carries out the reaction (25R)-3beta,4beta-dihydroxycholest-5-en-26-al + 2 reduced [adrenodoxin] + O2 + H(+) = (25R)-3beta,4beta-dihydroxycholest-5-en-26-oate + 2 oxidized [adrenodoxin] + H2O. The catalysed reaction is (25R)-4beta,26-dihydroxycholesterol + 2 reduced [adrenodoxin] + O2 + 2 H(+) = (25R)-3beta,4beta-dihydroxycholest-5-en-26-al + 2 oxidized [adrenodoxin] + 2 H2O. It catalyses the reaction 4beta-hydroxycholesterol + 2 reduced [adrenodoxin] + O2 + 2 H(+) = (25R)-4beta,26-dihydroxycholesterol + 2 oxidized [adrenodoxin] + H2O. The enzyme catalyses (25R)-3beta-hydroxy-5-cholesten-26-al + 2 reduced [adrenodoxin] + O2 + H(+) = (25R)-3beta-hydroxy-5-cholestenoate + 2 oxidized [adrenodoxin] + H2O. It carries out the reaction (25R)-cholest-5-ene-3beta,26-diol + 2 reduced [adrenodoxin] + O2 + 2 H(+) = (25R)-3beta-hydroxy-5-cholesten-26-al + 2 oxidized [adrenodoxin] + 2 H2O. The catalysed reaction is (25R)-3alpha,7alpha,12alpha-trihydroxy-5beta-cholestan-26-al + 2 reduced [adrenodoxin] + O2 + H(+) = (25R)-3alpha,7alpha,12alpha-trihydroxy-5beta-cholestan-26-oate + 2 oxidized [adrenodoxin] + H2O. It catalyses the reaction 5beta-cholestane-3alpha,7alpha,12alpha-triol + 2 reduced [adrenodoxin] + O2 + 2 H(+) = (25R)-5beta-cholestane-3alpha,7alpha,12alpha,26-tetrol + 2 oxidized [adrenodoxin] + H2O. It participates in hormone biosynthesis; cholecalciferol biosynthesis. It functions in the pathway steroid metabolism; cholesterol degradation. Its pathway is lipid metabolism; bile acid biosynthesis. Functionally, cytochrome P450 monooxygenase that catalyzes regio- and stereospecific hydroxylation of cholesterol and its derivatives. Hydroxylates (with R stereochemistry) the terminal methyl group of cholesterol side-chain in a three step reaction to yield at first a C26 alcohol, then a C26 aldehyde and finally a C26 acid. Regulates cholesterol homeostasis by catalyzing the conversion of excess cholesterol to bile acids via both the 'neutral' (classic) and the 'acid' (alternative) pathways. May also regulate cholesterol homeostasis via generation of active oxysterols, which act as ligands for NR1H2 and NR1H3 nuclear receptors, modulating the transcription of genes involved in lipid metabolism. Plays a role in cholestanol metabolism in the cerebellum. Similarly to cholesterol, hydroxylates cholestanol and may facilitate sterol diffusion through the blood-brain barrier to the systemic circulation for further degradation. Also hydroxylates retinal 7-ketocholesterol, a noxious oxysterol with pro-inflammatory and pro-apoptotic effects, and may play a role in its elimination from the retinal pigment epithelium. May play a redundant role in vitamin D biosynthesis. Catalyzes 25-hydroxylation of vitamin D3 that is required for its conversion to a functionally active form. This chain is Sterol 26-hydroxylase, mitochondrial (Cyp27a1), found in Rattus norvegicus (Rat).